Reading from the N-terminus, the 701-residue chain is Ribosomal RNA large subunit methyltransferase K/L (701 aa).

Residues 43-154 (LLYQSLMWSR…KETAHISLDL (112 aa)) enclose the THUMP domain.

Belongs to the methyltransferase superfamily. RlmKL family.

It localises to the cytoplasm. The catalysed reaction is guanosine(2445) in 23S rRNA + S-adenosyl-L-methionine = N(2)-methylguanosine(2445) in 23S rRNA + S-adenosyl-L-homocysteine + H(+). It carries out the reaction guanosine(2069) in 23S rRNA + S-adenosyl-L-methionine = N(2)-methylguanosine(2069) in 23S rRNA + S-adenosyl-L-homocysteine + H(+). Specifically methylates the guanine in position 2445 (m2G2445) and the guanine in position 2069 (m7G2069) of 23S rRNA. The polypeptide is Ribosomal RNA large subunit methyltransferase K/L (Klebsiella pneumoniae (strain 342)).